We begin with the raw amino-acid sequence, 183 residues long: Acireductone dioxygenase (183 aa).

The disordered stretch occupies residues 1–21; sequence MVQAWYMDSDTTTDQREEHQL. Residues His-90, His-92, Glu-96, and His-135 each contribute to the Fe(2+) site. 4 residues coordinate Ni(2+): His-90, His-92, Glu-96, and His-135.

Belongs to the acireductone dioxygenase (ARD) family. Fe(2+) serves as cofactor. It depends on Ni(2+) as a cofactor.

Its subcellular location is the cytoplasm. The protein localises to the nucleus. The catalysed reaction is 1,2-dihydroxy-5-(methylsulfanyl)pent-1-en-3-one + O2 = 4-methylsulfanyl-2-oxobutanoate + formate + 2 H(+). It catalyses the reaction 1,2-dihydroxy-5-(methylsulfanyl)pent-1-en-3-one + O2 = 3-(methylsulfanyl)propanoate + CO + formate + 2 H(+). It functions in the pathway amino-acid biosynthesis; L-methionine biosynthesis via salvage pathway; L-methionine from S-methyl-5-thio-alpha-D-ribose 1-phosphate: step 5/6. Its function is as follows. Catalyzes 2 different reactions between oxygen and the acireductone 1,2-dihydroxy-3-keto-5-methylthiopentene (DHK-MTPene) depending upon the metal bound in the active site. Fe-containing acireductone dioxygenase (Fe-ARD) produces formate and 2-keto-4-methylthiobutyrate (KMTB), the alpha-ketoacid precursor of methionine in the methionine recycle pathway. Ni-containing acireductone dioxygenase (Ni-ARD) produces methylthiopropionate, carbon monoxide and formate, and does not lie on the methionine recycle pathway. This Ixodes scapularis (Black-legged tick) protein is Acireductone dioxygenase.